The chain runs to 493 residues: Reticulophagy regulator 1 (493 aa).

Positions 1–52 are disordered; that stretch reads MASPAPPEPAEQGSPALAAAPQAPPPPTRAPPEEPEGAAPPEEGAAAGAGRQ. Topologically, residues 1–55 are cytoplasmic; that stretch reads MASPAPPEPAEQGSPALAAAPQAPPPPTRAPPEEPEGAAPPEEGAAAGAGRQVEE. Residues 37 to 52 show a composition bias toward low complexity; the sequence is GAAPPEEGAAAGAGRQ. A helical transmembrane segment spans residues 56-76; it reads AAGGVAAVVTWLLGEPALWLG. At 77-87 the chain is on the lumenal side; that stretch reads GRADELLSWKR. Residues 80 to 229 are reticulon homology domain; that stretch reads DELLSWKRPL…LLCAFLCPLF (150 aa). The chain crosses the membrane as a helical span at residues 88–108; that stretch reads PLHSLLAFVGANLVFWFLALT. Topologically, residues 109–114 are cytoplasmic; it reads PWRVYH. A helical transmembrane segment spans residues 115–135; sequence LISVMILTRVIMQIIKDMILS. Residues 136–204 lie on the Lumenal side of the membrane; the sequence is RTRGAQLWRS…LVCSVCTFFT (69 aa). Serine 145 is subject to Phosphoserine. Serine 147 carries the phosphoserine; by CAMK2B modification. Serine 149 is modified (phosphoserine). A helical transmembrane segment spans residues 205–225; the sequence is ILGSYIPGVILSYLLLLCAFL. The Cytoplasmic portion of the chain corresponds to 226–493; that stretch reads CPLFKCNDIG…GFLSNLLGGH (268 aa). Positions 315-326 are enriched in polar residues; that stretch reads FNLSEGYTPQTD. Disordered regions lie at residues 315–394 and 435–493; these read FNLS…GLSL and AAPS…LGGH. A compositionally biased stretch (basic and acidic residues) spans 330–344; the sequence is DLDRPSEEVFSRDLS. Threonine 353 is subject to Phosphothreonine. The span at 368–388 shows a compositional bias: basic and acidic residues; that stretch reads ELKRKKEQLDGGPRRSTEKKS. Residues 441-463 are compositionally biased toward acidic residues; it reads EDTDTEEGDDFELLDQSELDQIE. Residues 449-454 carry the LIR motif motif; sequence DDFELL. Over residues 467–486 the composition is skewed to polar residues; that stretch reads GLSQDQEAEAQQNKKSSGFL.

The protein belongs to the RETREG family. Homooligomer; oligomerization is enhanced following endoplasmic reticulum stress and is mediated by the reticulon homology domain. Interacts with ATG8 family modifier proteins MAP1LC3A, MAP1LC3B, GABARAP, GABARAPL1 and GABARAPL2. In terms of processing, phosphorylation at Ser-147 by CAMK2B enhances oligomerization and membrane scission and reticulophagy activity.

It is found in the golgi apparatus. The protein localises to the cis-Golgi network membrane. The protein resides in the endoplasmic reticulum membrane. Endoplasmic reticulum (ER)-anchored autophagy regulator which mediates ER delivery into lysosomes through sequestration into autophagosomes. Promotes membrane remodeling and ER scission via its membrane bending capacity and targets the fragments into autophagosomes via interaction with ATG8 family proteins. Active under basal conditions. Required for collagen quality control in a LIR motif-dependent manner. Required for long-term survival of nociceptive and autonomic ganglion neurons. The sequence is that of Reticulophagy regulator 1 (RETREG1) from Bos taurus (Bovine).